The primary structure comprises 249 residues: 5'-nucleotidase SurE (249 aa).

A divalent metal cation-binding residues include D9, D10, S40, and N92.

The protein belongs to the SurE nucleotidase family. A divalent metal cation is required as a cofactor.

It localises to the cytoplasm. The catalysed reaction is a ribonucleoside 5'-phosphate + H2O = a ribonucleoside + phosphate. Nucleotidase that shows phosphatase activity on nucleoside 5'-monophosphates. The protein is 5'-nucleotidase SurE of Shewanella sp. (strain MR-4).